We begin with the raw amino-acid sequence, 180 residues long: Large ribosomal subunit protein uL5 (180 aa).

The protein belongs to the universal ribosomal protein uL5 family. As to quaternary structure, part of the 50S ribosomal subunit; part of the 5S rRNA/L5/L18/L25 subcomplex. Contacts the 5S rRNA and the P site tRNA. Forms a bridge to the 30S subunit in the 70S ribosome.

Its function is as follows. This is one of the proteins that bind and probably mediate the attachment of the 5S RNA into the large ribosomal subunit, where it forms part of the central protuberance. In the 70S ribosome it contacts protein S13 of the 30S subunit (bridge B1b), connecting the 2 subunits; this bridge is implicated in subunit movement. Contacts the P site tRNA; the 5S rRNA and some of its associated proteins might help stabilize positioning of ribosome-bound tRNAs. The protein is Large ribosomal subunit protein uL5 of Synechococcus sp. (strain JA-2-3B'a(2-13)) (Cyanobacteria bacterium Yellowstone B-Prime).